A 59-amino-acid polypeptide reads, in one-letter code: Large ribosomal subunit protein uL30 (59 aa).

Belongs to the universal ribosomal protein uL30 family. Part of the 50S ribosomal subunit.

In Citrifermentans bemidjiense (strain ATCC BAA-1014 / DSM 16622 / JCM 12645 / Bem) (Geobacter bemidjiensis), this protein is Large ribosomal subunit protein uL30.